The chain runs to 186 residues: Ribosome-recycling factor (186 aa).

Residues 135-164 are disordered; that stretch reads DGMDDLKKAEKDGEIGQDESRAQSERVQKM.

This sequence belongs to the RRF family.

Its subcellular location is the cytoplasm. Its function is as follows. Responsible for the release of ribosomes from messenger RNA at the termination of protein biosynthesis. May increase the efficiency of translation by recycling ribosomes from one round of translation to another. The protein is Ribosome-recycling factor of Rhizobium meliloti (strain 1021) (Ensifer meliloti).